A 132-amino-acid chain; its full sequence is Interferon-induced transmembrane protein 5 (132 aa).

Residues 1 to 11 (MDTAYPREDTR) are compositionally biased toward basic and acidic residues. The segment at 1–21 (MDTAYPREDTRAPTPSKAGAH) is disordered. The Extracellular segment spans residues 1–36 (MDTAYPREDTRAPTPSKAGAHTALTLGAPHPPPRDH). A helical transmembrane segment spans residues 37–57 (LIWSVFSTLYLNLCCLGFLAL). Residues Cys50, Cys51, and Cys84 are each lipidated (S-palmitoyl cysteine). Topologically, residues 58–86 (AYSIKARDQKVVGDLEAARRFGSKAKCYN) are cytoplasmic. The helical transmembrane segment at 87-107 (ILAAMWTLVPPLLLLGLVVTG) threads the bilayer. Residues 108–132 (ALHLARLAKDSAAFFSTKFDDADYD) are Extracellular-facing.

It belongs to the CD225/Dispanin family. In terms of assembly, interacts with FKBP11. Post-translationally, palmitoylated. In terms of tissue distribution, detected in osteoblasts and fibroblasts (at protein level). Detected in bone.

The protein localises to the cell membrane. Functionally, required for normal bone mineralization. The sequence is that of Interferon-induced transmembrane protein 5 (IFITM5) from Homo sapiens (Human).